Consider the following 195-residue polypeptide: ATP-dependent Clp protease proteolytic subunit (195 aa).

Serine 99 functions as the Nucleophile in the catalytic mechanism. Histidine 124 is a catalytic residue.

Belongs to the peptidase S14 family. As to quaternary structure, fourteen ClpP subunits assemble into 2 heptameric rings which stack back to back to give a disk-like structure with a central cavity, resembling the structure of eukaryotic proteasomes.

It is found in the cytoplasm. It carries out the reaction Hydrolysis of proteins to small peptides in the presence of ATP and magnesium. alpha-casein is the usual test substrate. In the absence of ATP, only oligopeptides shorter than five residues are hydrolyzed (such as succinyl-Leu-Tyr-|-NHMec, and Leu-Tyr-Leu-|-Tyr-Trp, in which cleavage of the -Tyr-|-Leu- and -Tyr-|-Trp bonds also occurs).. In terms of biological role, cleaves peptides in various proteins in a process that requires ATP hydrolysis. Has a chymotrypsin-like activity. Plays a major role in the degradation of misfolded proteins. The sequence is that of ATP-dependent Clp protease proteolytic subunit from Desulforamulus reducens (strain ATCC BAA-1160 / DSM 100696 / MI-1) (Desulfotomaculum reducens).